The sequence spans 784 residues: MAAVAGAPGPGEGGESEQDSETIPGERRLGRLSCEPMEAELDSERRSLVRCEPCCGMEIDTQENAGPDIEQLGDSGAEQVYGIHTNSEFVSVSAVDYMGINQGQIAPENRKARSEQLPREPFLQRQPIPMILSEVTDSGIYTGLCLEEAKFSSNNGSEASLNYSECDNRSVGTTEGSVVTSGIDSLIPGSEVQVTLDHIIQDALVVSFCHGNRIFSGVLMDLSKRFGPHGIPVTVHPRREYKNKPVESIQEESKSFHEEPLVKSEENSPEDVTPIQQLENCKVQNLWTTKPPPLFHEGAPYPPPLFIRDTYNQSIPQPPPRKIKRPKKKIYREEPTSIMNAIKLRPRQVLCDKCKNNVVADKKEIRKVATDSYKTEEGKRRRHETVTTVNKKLKTDHKVNGKSQNESQKRTPITKVTNLAHGRGKVVKVPSQTSAAKTQMHTKEVLQNKNMDHVKAREVLKMAKEKAQKKQKVTTSSKNAHSKVHFTRRLQNSSSGTLPPRLRIKPQRYRNEENDSSLKPGLETLRSSKIGIKPQTRYSATRSAGETPSEIQSPSNGPEEISSEMQDTNVCVPPEEQDLQQTLGKRGSKSNITVYMTINQKKANSSSASVCSSDSTDDMKSSHSECSSTENFDFPPGSMHAPSSSSSSSASSKEEKKLSNSLKIKMFSKNVSKCVTPDGRTICVGDIVWAKIYGFPWWPARILAITVSRKDTGLLVRQEARISWFGSPTTSFLALSQLTPFLENFQSRFNKKRKGLYRKAITEAAKAAKQLTPEVRALLTQFET.

4 disordered regions span residues 1–32 (MAAVAGAPGPGEGGESEQDSETIPGERRLGRL), 244–272 (KPVESIQEESKSFHEEPLVKSEENSPEDV), 463–567 (AKEK…EMQD), and 605–654 (SSSA…SSKE). The span at 244-266 (KPVESIQEESKSFHEEPLVKSEE) shows a compositional bias: basic and acidic residues. The segment covering 536–556 (TRYSATRSAGETPSEIQSPSN) has biased composition (polar residues). Over residues 605–614 (SSSASVCSSD) the composition is skewed to low complexity. A PWWP domain is found at 684–744 (VGDIVWAKIY…LSQLTPFLEN (61 aa)).

Its subcellular location is the nucleus. In terms of biological role, H2A.Z-specific chromatin binding protein which plays an important role in the neural crest cell differentiation and/or migration during early development and is essential for the development of the head and eye. Acts as an adapter between distinct nucleosome components (H3K36me3 or H2A.Z) and chromatin-modifying complexes, contributing to the regulation of the levels of histone acetylation at actively transcribed genes. This Xenopus tropicalis (Western clawed frog) protein is PWWP domain-containing protein 2A (pwwp2a).